A 231-amino-acid polypeptide reads, in one-letter code: Ribose-5-phosphate isomerase A (231 aa).

Residues 32-35, 85-88, and 98-101 contribute to the substrate site; these read TGST, DGAD, and KGGG. Residue Glu-107 is the Proton acceptor of the active site. A substrate-binding site is contributed by Lys-125.

Belongs to the ribose 5-phosphate isomerase family. In terms of assembly, homodimer.

The enzyme catalyses aldehydo-D-ribose 5-phosphate = D-ribulose 5-phosphate. It functions in the pathway carbohydrate degradation; pentose phosphate pathway; D-ribose 5-phosphate from D-ribulose 5-phosphate (non-oxidative stage): step 1/1. Its function is as follows. Catalyzes the reversible conversion of ribose-5-phosphate to ribulose 5-phosphate. This Paraburkholderia phytofirmans (strain DSM 17436 / LMG 22146 / PsJN) (Burkholderia phytofirmans) protein is Ribose-5-phosphate isomerase A.